The primary structure comprises 610 residues: DNA mismatch repair protein MutL (610 aa).

Belongs to the DNA mismatch repair MutL/HexB family.

In terms of biological role, this protein is involved in the repair of mismatches in DNA. It is required for dam-dependent methyl-directed DNA mismatch repair. May act as a 'molecular matchmaker', a protein that promotes the formation of a stable complex between two or more DNA-binding proteins in an ATP-dependent manner without itself being part of a final effector complex. This chain is DNA mismatch repair protein MutL, found in Rickettsia africae (strain ESF-5).